The primary structure comprises 573 residues: DNA ligase (573 aa).

Glu-250 is an ATP binding site. The N6-AMP-lysine intermediate role is filled by Lys-252. ATP-binding residues include Arg-257, Arg-272, Glu-301, Phe-342, Arg-432, and Lys-438.

The protein belongs to the ATP-dependent DNA ligase family. The cofactor is Mg(2+).

The catalysed reaction is ATP + (deoxyribonucleotide)n-3'-hydroxyl + 5'-phospho-(deoxyribonucleotide)m = (deoxyribonucleotide)n+m + AMP + diphosphate.. DNA ligase that seals nicks in double-stranded DNA during DNA replication, DNA recombination and DNA repair. The polypeptide is DNA ligase (Methanococcus maripaludis (strain C6 / ATCC BAA-1332)).